Reading from the N-terminus, the 420-residue chain is MKTLIARHKAGEHIGICSVCSAHPLVIEAALAFDRNSTRKVLIEATSNQVNQFGGYTGMTPADFREFVFTIADKVGFARERIILGGDHLGPNCWQQENADAAMEKSVELVKAYVRAGFSKIHLDASMSCAGDPIPLAPETVAERAAVLCFAAESVATDCQREQLSYVIGTEVPVPGGEASAIQSVHITHVEDAANTLRTHQKAFIARGLTEALTRVIAIVVQPGVEFDHSNIIHYQPQEAQALAQWIENTRMVYEAHSTDYQTRTAYWELVRDHFAILKVGPALTFALREAIFALAQIEQELIAPENRSGCLAVIEEVMLDEPQYWKKYYRTGFNDSLLDIRYSLSDRIRYYWPHSRIKNSVETMMVNLEGVDIPLGMISQYLPKQFERIQSGELSAIPHQLIMDKIYDVLRAYRYGCAE.

It belongs to the GatZ/KbaZ family. GatZ subfamily. Forms a complex with GatY.

The protein operates within carbohydrate metabolism; D-tagatose 6-phosphate degradation; D-glyceraldehyde 3-phosphate and glycerone phosphate from D-tagatose 6-phosphate: step 2/2. Its function is as follows. Component of the tagatose-1,6-bisphosphate aldolase GatYZ that is required for full activity and stability of the Y subunit. Could have a chaperone-like function for the proper and stable folding of GatY. When expressed alone, GatZ does not show any aldolase activity. Is involved in the catabolism of galactitol. This chain is D-tagatose-1,6-bisphosphate aldolase subunit GatZ, found in Shigella boydii serotype 18 (strain CDC 3083-94 / BS512).